A 59-amino-acid chain; its full sequence is Conotoxin Cl14.4 (59 aa).

An N-terminal signal peptide occupies residues 1-19 (MKFLLFLSVALLLTSFIET). Residues 20–36 (VTVNKAGMERPSRALVG) constitute a propeptide that is removed on maturation. Isoleucine amide is present on Ile-58.

In terms of processing, contains 2 disulfide bonds. Expressed by the venom duct.

It localises to the secreted. The sequence is that of Conotoxin Cl14.4 from Californiconus californicus (California cone).